A 354-amino-acid polypeptide reads, in one-letter code: NADH-quinone oxidoreductase subunit H (354 aa).

The next 8 membrane-spanning stretches (helical) occupy residues 22 to 42 (ILIR…YLIL), 91 to 111 (YLIA…VIPF), 124 to 144 (LLYV…AGWA), 168 to 188 (MGFA…SAIV), 203 to 223 (VLSW…ISGV), 255 to 275 (LFFL…ALLF), 291 to 311 (IPGF…FIWI), and 326 to 346 (LGWK…AIWI).

It belongs to the complex I subunit 1 family. NDH-1 is composed of 14 different subunits. Subunits NuoA, H, J, K, L, M, N constitute the membrane sector of the complex.

It localises to the cell inner membrane. The enzyme catalyses a quinone + NADH + 5 H(+)(in) = a quinol + NAD(+) + 4 H(+)(out). NDH-1 shuttles electrons from NADH, via FMN and iron-sulfur (Fe-S) centers, to quinones in the respiratory chain. The immediate electron acceptor for the enzyme in this species is believed to be ubiquinone. Couples the redox reaction to proton translocation (for every two electrons transferred, four hydrogen ions are translocated across the cytoplasmic membrane), and thus conserves the redox energy in a proton gradient. This subunit may bind ubiquinone. This Cupriavidus pinatubonensis (strain JMP 134 / LMG 1197) (Cupriavidus necator (strain JMP 134)) protein is NADH-quinone oxidoreductase subunit H.